Reading from the N-terminus, the 135-residue chain is Inner membrane protein YgfX (135 aa).

Topologically, residues 1-11 (MVLWQSDLRVS) are cytoplasmic. Residues 1–96 (MVLWQSDLRV…APWMIKSGMM (96 aa)) form a not required to inhibit FtsZ or MreB polymerization region. The helical transmembrane segment at 12–32 (WRAQWLSLLIHGLVAAVILLM) threads the bilayer. Residues 33–37 (PWPLS) are Periplasmic-facing. Residues 38 to 54 (YTPLWMVLLSLVVFDCV) traverse the membrane as a helical segment. Over 55 to 135 (RSQRRINARQ…RILLQQETQR (81 aa)) the chain is Cytoplasmic.

As to quaternary structure, interacts with MreB and FtsZ; interaction with the latter requires FtsZ residues 33-49.

It localises to the cell inner membrane. Its function is as follows. A probable inner membrane protein. Has been shown not to be a toxin, no effects on growth are seen in LB or minimal medium up to 6 or 21 hours (respectively) after induction of expression. Interacts with cytoskeletal proteins FtsZ and MreB; inhibits FtsZ GTP-dependent polymerization as well as MreB ATP-dependent polymerization. Restores production of prodigiosin antibiotic (Pig) in Serratia strains with deletions of sdhE-ygfX; overexpression of this protein and CptB also restores Pig production to a slightly lesser extent in Serratia. The chain is Inner membrane protein YgfX from Escherichia coli (strain K12).